A 1041-amino-acid polypeptide reads, in one-letter code: Isoleucine--tRNA ligase (1041 aa).

Residues 53-63 (PFANGLPHYGH) carry the 'HIGH' region motif. Positions 619 to 623 (KMSKS) match the 'KMSKS' region motif. Lys-622 serves as a coordination point for ATP.

Belongs to the class-I aminoacyl-tRNA synthetase family. IleS type 2 subfamily. Monomer. Zn(2+) is required as a cofactor.

Its subcellular location is the cytoplasm. It catalyses the reaction tRNA(Ile) + L-isoleucine + ATP = L-isoleucyl-tRNA(Ile) + AMP + diphosphate. Functionally, catalyzes the attachment of isoleucine to tRNA(Ile). As IleRS can inadvertently accommodate and process structurally similar amino acids such as valine, to avoid such errors it has two additional distinct tRNA(Ile)-dependent editing activities. One activity is designated as 'pretransfer' editing and involves the hydrolysis of activated Val-AMP. The other activity is designated 'posttransfer' editing and involves deacylation of mischarged Val-tRNA(Ile). This Mycobacterium bovis (strain ATCC BAA-935 / AF2122/97) protein is Isoleucine--tRNA ligase.